Reading from the N-terminus, the 309-residue chain is Aromatic prenyltransferase (309 aa).

This sequence belongs to the aromatic prenyltransferase family.

In terms of biological role, prenyltransferase that attaches isoprenoid moieties to carbon atoms of aromatic substrates in an enzyme-catalyzed Friedel-Crafts reaction. Shows specificity for dimethylallyl diphosphate (DMAPP) and does not accept geranyl diphosphate (GPP) or isopentenyl diphosphate (IPP). Prenylates the artificial substrate 2,7-dihydroxynaphthalene (2,7-DHN), as well as dihydrophenazine-1-carboxylic acid and 4-hydroxybenzoic acid at lower levels. Only traces of products are detected with aspulvinone E or flaviolin as substrates; and no product is formed with L-tryptophan, L-tyrosine, or 4-hydroxyphenylpyruvate. Ptf seems no to be involved in the prenylation reaction in the biosynthesis of aspulvinone H and J and the physiological function of ptf remains unknown. The polypeptide is Aromatic prenyltransferase (Botryotinia fuckeliana (strain B05.10) (Noble rot fungus)).